The sequence spans 303 residues: MTSPNESRAFNAADDLIGDGSVERAGLHRATSVPGESSEGLQRGHSPEPNDSPPWQRGSARASQSGYRPSDPLTTTRQSNPAPGANVRSNRFISGMTAPALSGQLPKKNNSTQALEPVLMSNEVPFTESYASELPDLSGPVQRTVPCKPSPDRGSSTPRMGRLEITKVRGTGEIRSQISRRSHGPVRASMQIRRIDPWSMLKVSLLLSVALFFVWMIAVAFLYLLLGGMGVWAKLNSNVGDLLNNTGGNSGELVSNSTIFGCAVLVGLVNIVLMTTMAAIAAFVYNLSSDLVGGVEVTLADLD.

2 disordered regions span residues 1–89 (MTSP…NVRS) and 132–159 (SELP…STPR). A compositionally biased stretch (polar residues) spans 61 to 89 (RASQSGYRPSDPLTTTRQSNPAPGANVRS). A run of 2 helical transmembrane segments spans residues 205–225 (LLLS…LYLL) and 264–284 (VLVG…AAFV).

To M.tuberculosis Rv0007.

Its subcellular location is the cell membrane. This is an uncharacterized protein from Mycobacterium leprae (strain TN).